The chain runs to 492 residues: GlcNAc-binding protein A (492 aa).

The signal sequence occupies residues 1-23 (MNKSSTKTLIALSMMAVSSGVSA). In terms of domain architecture, Chitin-binding type-4 spans 24-204 (HGYVSETNDG…AFYNVIDVKF (181 aa)). The Chitin-binding type-3 domain maps to 443 to 484 (AGTKVLAEDGNVYQCKEFPYSGYCVQWTETATNFAPGVGSDW).

The protein belongs to the GbpA family.

The protein localises to the secreted. In terms of biological role, probably interacts with GlcNAc residues. May promote attachment to both epithelial cell surfaces and chitin. This is GlcNAc-binding protein A from Aliivibrio fischeri (strain ATCC 700601 / ES114) (Vibrio fischeri).